The primary structure comprises 315 residues: DNA-directed RNA polymerase subunit alpha (315 aa).

Residues 1–228 (MLEIEKPKIE…EHLRLFVGLT (228 aa)) are alpha N-terminal domain (alpha-NTD). The tract at residues 245–315 (KNKLLEMPIE…LGLDLRHDEE (71 aa)) is alpha C-terminal domain (alpha-CTD).

It belongs to the RNA polymerase alpha chain family. In terms of assembly, homodimer. The RNAP catalytic core consists of 2 alpha, 1 beta, 1 beta' and 1 omega subunit. When a sigma factor is associated with the core the holoenzyme is formed, which can initiate transcription.

The enzyme catalyses RNA(n) + a ribonucleoside 5'-triphosphate = RNA(n+1) + diphosphate. DNA-dependent RNA polymerase catalyzes the transcription of DNA into RNA using the four ribonucleoside triphosphates as substrates. This chain is DNA-directed RNA polymerase subunit alpha, found in Desulforudis audaxviator (strain MP104C).